A 276-amino-acid polypeptide reads, in one-letter code: 4-deoxy-L-threo-5-hexosulose-uronate ketol-isomerase 2 (276 aa).

Residues His-194, His-196, Glu-201, and His-243 each contribute to the Zn(2+) site.

It belongs to the KduI family. Requires Zn(2+) as cofactor.

The enzyme catalyses 5-dehydro-4-deoxy-D-glucuronate = 3-deoxy-D-glycero-2,5-hexodiulosonate. It participates in glycan metabolism; pectin degradation; 2-dehydro-3-deoxy-D-gluconate from pectin: step 4/5. In terms of biological role, catalyzes the isomerization of 5-dehydro-4-deoxy-D-glucuronate to 3-deoxy-D-glycero-2,5-hexodiulosonate. The chain is 4-deoxy-L-threo-5-hexosulose-uronate ketol-isomerase 2 (kduI2) from Enterococcus faecalis (strain ATCC 700802 / V583).